A 222-amino-acid chain; its full sequence is MKAAVITFPGSNCDRDLATAFEKAGADVTRVWHKDTALPEGVDVVGVPGGFSFGDYLRCGAIAARSPIAAAMIRHAERGGYVLGICNGFQVLTETGLLPGALMRNAGLKFICRRVDLRVATADSAFTSGWAAGDAVRFPIAHHDGNYTADPETLARLRGEDRVAFTYLDNPNGSMEDIAGILSANRRVLGLMPHPERAVEEAQGGADGMGLFRALLGGMALV.

Residues K2–V222 enclose the Glutamine amidotransferase type-1 domain. C86 acts as the Nucleophile in catalysis. Active-site residues include H194 and E196.

As to quaternary structure, part of the FGAM synthase complex composed of 1 PurL, 1 PurQ and 2 PurS subunits.

Its subcellular location is the cytoplasm. It carries out the reaction N(2)-formyl-N(1)-(5-phospho-beta-D-ribosyl)glycinamide + L-glutamine + ATP + H2O = 2-formamido-N(1)-(5-O-phospho-beta-D-ribosyl)acetamidine + L-glutamate + ADP + phosphate + H(+). It catalyses the reaction L-glutamine + H2O = L-glutamate + NH4(+). It functions in the pathway purine metabolism; IMP biosynthesis via de novo pathway; 5-amino-1-(5-phospho-D-ribosyl)imidazole from N(2)-formyl-N(1)-(5-phospho-D-ribosyl)glycinamide: step 1/2. In terms of biological role, part of the phosphoribosylformylglycinamidine synthase complex involved in the purines biosynthetic pathway. Catalyzes the ATP-dependent conversion of formylglycinamide ribonucleotide (FGAR) and glutamine to yield formylglycinamidine ribonucleotide (FGAM) and glutamate. The FGAM synthase complex is composed of three subunits. PurQ produces an ammonia molecule by converting glutamine to glutamate. PurL transfers the ammonia molecule to FGAR to form FGAM in an ATP-dependent manner. PurS interacts with PurQ and PurL and is thought to assist in the transfer of the ammonia molecule from PurQ to PurL. This Cereibacter sphaeroides (strain ATCC 17023 / DSM 158 / JCM 6121 / CCUG 31486 / LMG 2827 / NBRC 12203 / NCIMB 8253 / ATH 2.4.1.) (Rhodobacter sphaeroides) protein is Phosphoribosylformylglycinamidine synthase subunit PurQ.